Reading from the N-terminus, the 622-residue chain is Mitochondrial distribution and morphology protein 32 (622 aa).

A mitochondrion-targeting transit peptide spans methionine 1–threonine 70. At threonine 71–glutamate 123 the chain is on the mitochondrial matrix side. The helical transmembrane segment at isoleucine 124–threonine 144 threads the bilayer. The Mitochondrial intermembrane segment spans residues threonine 145–tryptophan 601. A helical transmembrane segment spans residues methionine 602–valine 622.

This sequence belongs to the MDM31/MDM32 family. In terms of assembly, interacts with MDM31. Participates in a complex of about 175 kDa.

The protein resides in the mitochondrion inner membrane. Functionally, involved in the organization of the mitochondrial membranes and the global structure of the mitochondria. Also required for mitochondrial distribution and mobility as well as for the maintenance of mitochondrial DNA nucleoids structures. This is Mitochondrial distribution and morphology protein 32 (MDM32) from Saccharomyces cerevisiae (strain ATCC 204508 / S288c) (Baker's yeast).